Consider the following 120-residue polypeptide: Large ribosomal subunit protein uL22 (120 aa).

The disordered stretch occupies residues 1-25 (MFVNKKYTAKGKNLPSSPKKVRPIA).

The protein belongs to the universal ribosomal protein uL22 family. As to quaternary structure, part of the 50S ribosomal subunit.

Functionally, this protein binds specifically to 23S rRNA; its binding is stimulated by other ribosomal proteins, e.g. L4, L17, and L20. It is important during the early stages of 50S assembly. It makes multiple contacts with different domains of the 23S rRNA in the assembled 50S subunit and ribosome. The globular domain of the protein is located near the polypeptide exit tunnel on the outside of the subunit, while an extended beta-hairpin is found that lines the wall of the exit tunnel in the center of the 70S ribosome. This Borrelia recurrentis (strain A1) protein is Large ribosomal subunit protein uL22.